The primary structure comprises 100 residues: NADH-quinone oxidoreductase subunit K 1 (100 aa).

Transmembrane regions (helical) follow at residues 4–24 (LNNY…GVLV), 29–49 (IVIF…FIAF), and 60–80 (IFVF…LALM).

Belongs to the complex I subunit 4L family. As to quaternary structure, NDH-1 is composed of 14 different subunits. Subunits NuoA, H, J, K, L, M, N constitute the membrane sector of the complex.

Its subcellular location is the cell inner membrane. It carries out the reaction a quinone + NADH + 5 H(+)(in) = a quinol + NAD(+) + 4 H(+)(out). Functionally, NDH-1 shuttles electrons from NADH, via FMN and iron-sulfur (Fe-S) centers, to quinones in the respiratory chain. The immediate electron acceptor for the enzyme in this species is believed to be ubiquinone. Couples the redox reaction to proton translocation (for every two electrons transferred, four hydrogen ions are translocated across the cytoplasmic membrane), and thus conserves the redox energy in a proton gradient. This chain is NADH-quinone oxidoreductase subunit K 1, found in Geotalea daltonii (strain DSM 22248 / JCM 15807 / FRC-32) (Geobacter daltonii).